A 673-amino-acid chain; its full sequence is NADH-quinone oxidoreductase chain 3 (673 aa).

The 86-residue stretch at 5–90 (RKIKIDDTII…PSEIRTNSPM (86 aa)) folds into the 2Fe-2S ferredoxin-type domain. The [2Fe-2S] cluster site is built by cysteine 37, cysteine 48, cysteine 51, and cysteine 66. Positions 90–129 (MVKKAREGVMEFLLINHPLDCPICDQGGECDLQDQAMAYG) constitute a 4Fe-4S His(Cys)3-ligated-type domain. [4Fe-4S] cluster-binding residues include histidine 106, cysteine 110, cysteine 113, cysteine 119, cysteine 158, cysteine 161, cysteine 164, and cysteine 208. The 57-residue stretch at 227-283 (LTKTESIDVMDALGSSIRIDTKGREVMRILPRNHDGVNEEWISDKTRFVWDGLRRQR) folds into the 4Fe-4S Mo/W bis-MGD-type domain.

It belongs to the complex I 75 kDa subunit family. In terms of assembly, NDH-1 is composed of at least 14 different subunits, Nqo1 to Nqo14. The complex has a L-shaped structure, with the hydrophobic arm (subunits Nqo7, Nqo8, Nqo10 to Nqo14) embedded in the inner membrane and the hydrophilic peripheral arm (subunits Nqo1 to Nqo6, Nqo9) protruding into the bacterial cytoplasm. The hydrophilic domain contains all the redox centers. The cofactor is [2Fe-2S] cluster. Requires [4Fe-4S] cluster as cofactor.

It is found in the cell inner membrane. It carries out the reaction a quinone + NADH + 5 H(+)(in) = a quinol + NAD(+) + 4 H(+)(out). Its function is as follows. NDH-1 shuttles electrons from NADH, via FMN and iron-sulfur (Fe-S) centers, to quinones in the respiratory chain. The immediate electron acceptor for the enzyme in this species is believed to be ubiquinone. Couples the redox reaction to proton translocation (for every two electrons transferred, four hydrogen ions are translocated across the cytoplasmic membrane), and thus conserves the redox energy in a proton gradient. The sequence is that of NADH-quinone oxidoreductase chain 3 from Paracoccus denitrificans.